Here is a 218-residue protein sequence, read N- to C-terminus: MKTEIQEIVTRLDQQSNKGEGGESMKWLFRPLLQMLAGGESVTIEDMATTTGKPVEEVKKVLQSLPSVEIDEQGRVVGLGLTLIPTPHHFTVDGKQLYAWCALDTLIFPALIGRSVNIESPCHSTGEPIRLNVEPDHIVSVEPSTAVVSIVTPDDMSSIRTAFCNEVHFFSSPNAAEDWLDQHPGGKVLSVEDAFELGRLMGTRYEESRPANGSCCHI.

It belongs to the MerB family.

The catalysed reaction is an alkylmercury + H(+) = an alkane + Hg(2+). Its function is as follows. Cleaves the carbon-mercury bond of organomercurials such as phenylmercuric acetate. One product is Hg(2+), which is subsequently detoxified by the mercuric reductase. This is Alkylmercury lyase from Clostridium butyricum.